The primary structure comprises 62 residues: Protein DsrB (62 aa).

This sequence belongs to the DsrB family.

This is Protein DsrB from Citrobacter koseri (strain ATCC BAA-895 / CDC 4225-83 / SGSC4696).